Reading from the N-terminus, the 126-residue chain is Nucleoside diphosphate kinase B (126 aa).

The ATP site is built by Lys6, Phe37, Thr68, Arg79, and Asn89. His92 serves as the catalytic Pros-phosphohistidine intermediate.

It belongs to the NDK family. Mg(2+) serves as cofactor.

Its subcellular location is the cytoplasm. It is found in the nucleus. The protein localises to the cell projection. The protein resides in the lamellipodium. It localises to the ruffle. The catalysed reaction is a 2'-deoxyribonucleoside 5'-diphosphate + ATP = a 2'-deoxyribonucleoside 5'-triphosphate + ADP. The enzyme catalyses a ribonucleoside 5'-diphosphate + ATP = a ribonucleoside 5'-triphosphate + ADP. In terms of biological role, major role in the synthesis of nucleoside triphosphates other than ATP. This chain is Nucleoside diphosphate kinase B (nme2), found in Merluccius capensis (Shallow-water Cape hake).